We begin with the raw amino-acid sequence, 742 residues long: NAD(P)H-quinone oxidoreductase subunit 5, chloroplastic (742 aa).

Transmembrane regions (helical) follow at residues 9 to 29 (WIIPFLPLPVPMLIGLGLLLF), 40 to 60 (WSFQSVLLLSIVMIFSMNLSI), 89 to 109 (IDPLTSIMLILITTVGIMVLI), 125 to 145 (FAYMSFFSTSMLGLVTSSNLI), 147 to 167 (IYIFWELVGICSYLLIGFWFT), 185 to 205 (GDFGLLLGILGFYWITGSFEF), 219 to 239 (NEVNFLFVTLCAILLFAGAIA), 258 to 278 (TPISALIHAATMVAAGIFLVA), 283 to 303 (LFIVIPHIMNFISLIGIITVF), 327 to 347 (LGYMMLALGMGSYRSALFHLI), 354 to 374 (ALLFLGSGSVIHSMETLVGYC), 396 to 416 (NSFLLGTLSLCGIPPLACFWS), 425 to 445 (WLYSPIFGIIAWSTAGLTAFY), 550 to 570 (LFPILILILFTLFVGFLGIPF), 606 to 626 (FFSVSIASFGIFIAFFLYKPV), and 722 to 742 (YLFFYFSYVAIFLLIYYFFNV).

The protein belongs to the complex I subunit 5 family. As to quaternary structure, NDH is composed of at least 16 different subunits, 5 of which are encoded in the nucleus.

The protein localises to the plastid. It localises to the chloroplast thylakoid membrane. It catalyses the reaction a plastoquinone + NADH + (n+1) H(+)(in) = a plastoquinol + NAD(+) + n H(+)(out). It carries out the reaction a plastoquinone + NADPH + (n+1) H(+)(in) = a plastoquinol + NADP(+) + n H(+)(out). Its function is as follows. NDH shuttles electrons from NAD(P)H:plastoquinone, via FMN and iron-sulfur (Fe-S) centers, to quinones in the photosynthetic chain and possibly in a chloroplast respiratory chain. The immediate electron acceptor for the enzyme in this species is believed to be plastoquinone. Couples the redox reaction to proton translocation, and thus conserves the redox energy in a proton gradient. The sequence is that of NAD(P)H-quinone oxidoreductase subunit 5, chloroplastic (ndhF) from Lactuca sativa (Garden lettuce).